Consider the following 407-residue polypeptide: Inactive non-canonical poly(A) RNA polymerase protein Trf4-2 (407 aa).

Mg(2+) is bound by residues Asp-85 and Asp-87. The 60-residue stretch at Leu-221–Asn-280 folds into the PAP-associated domain. Residues Leu-354–Asp-390 form a disordered region. The segment covering Pro-357–Ala-371 has biased composition (low complexity).

The protein belongs to the DNA polymerase type-B-like family.

The protein is Inactive non-canonical poly(A) RNA polymerase protein Trf4-2 of Drosophila melanogaster (Fruit fly).